The sequence spans 447 residues: UPF0210 protein LSEI_0897 (447 aa).

Belongs to the UPF0210 family. In terms of assembly, homodimer.

This is UPF0210 protein LSEI_0897 from Lacticaseibacillus paracasei (strain ATCC 334 / BCRC 17002 / CCUG 31169 / CIP 107868 / KCTC 3260 / NRRL B-441) (Lactobacillus paracasei).